Reading from the N-terminus, the 103-residue chain is Large ribosomal subunit protein bL25 (103 aa).

The protein belongs to the bacterial ribosomal protein bL25 family. In terms of assembly, part of the 50S ribosomal subunit; part of the 5S rRNA/L5/L18/L25 subcomplex. Contacts the 5S rRNA. Binds to the 5S rRNA independently of L5 and L18.

Functionally, this is one of the proteins that binds to the 5S RNA in the ribosome where it forms part of the central protuberance. This is Large ribosomal subunit protein bL25 from Blochmanniella floridana.